Here is a 121-residue protein sequence, read N- to C-terminus: Large ribosomal subunit protein uL14 (121 aa).

Belongs to the universal ribosomal protein uL14 family. In terms of assembly, part of the 50S ribosomal subunit. Forms a cluster with proteins L3 and L19. In the 70S ribosome, L14 and L19 interact and together make contacts with the 16S rRNA in bridges B5 and B8.

Functionally, binds to 23S rRNA. Forms part of two intersubunit bridges in the 70S ribosome. The sequence is that of Large ribosomal subunit protein uL14 from Parasynechococcus marenigrum (strain WH8102).